Consider the following 290-residue polypeptide: 33 kDa chaperonin (290 aa).

2 cysteine pairs are disulfide-bonded: cysteine 231/cysteine 233 and cysteine 263/cysteine 266.

Belongs to the HSP33 family. Under oxidizing conditions two disulfide bonds are formed involving the reactive cysteines. Under reducing conditions zinc is bound to the reactive cysteines and the protein is inactive.

It is found in the cytoplasm. Redox regulated molecular chaperone. Protects both thermally unfolding and oxidatively damaged proteins from irreversible aggregation. Plays an important role in the bacterial defense system toward oxidative stress. The chain is 33 kDa chaperonin from Thermotoga petrophila (strain ATCC BAA-488 / DSM 13995 / JCM 10881 / RKU-1).